A 775-amino-acid polypeptide reads, in one-letter code: DNA polymerase (775 aa).

Belongs to the DNA polymerase type-B family. Monomer.

It catalyses the reaction DNA(n) + a 2'-deoxyribonucleoside 5'-triphosphate = DNA(n+1) + diphosphate. Its function is as follows. In addition to polymerase activity, this DNA polymerase exhibits 3' to 5' exonuclease activity. The chain is DNA polymerase (pol) from Pyrococcus glycovorans.